The sequence spans 407 residues: Carbamoyl phosphate synthase small chain (407 aa).

The tract at residues 1 to 205 (MTETTPKTAP…LQDGYGEQDA (205 aa)) is CPSase. L-glutamine-binding residues include Ser-60, Gly-257, and Gly-259. The region spanning 209 to 397 (HVVALDFGVK…INLIRERKGQ (189 aa)) is the Glutamine amidotransferase type-1 domain. Cys-286 functions as the Nucleophile in the catalytic mechanism. L-glutamine-binding residues include Leu-287, Gln-290, Asn-328, Gly-330, and Phe-331. Residues His-370 and Glu-372 contribute to the active site.

The protein belongs to the CarA family. As to quaternary structure, composed of two chains; the small (or glutamine) chain promotes the hydrolysis of glutamine to ammonia, which is used by the large (or ammonia) chain to synthesize carbamoyl phosphate. Tetramer of heterodimers (alpha,beta)4.

It catalyses the reaction hydrogencarbonate + L-glutamine + 2 ATP + H2O = carbamoyl phosphate + L-glutamate + 2 ADP + phosphate + 2 H(+). The enzyme catalyses L-glutamine + H2O = L-glutamate + NH4(+). The protein operates within amino-acid biosynthesis; L-arginine biosynthesis; carbamoyl phosphate from bicarbonate: step 1/1. Its pathway is pyrimidine metabolism; UMP biosynthesis via de novo pathway; (S)-dihydroorotate from bicarbonate: step 1/3. In terms of biological role, small subunit of the glutamine-dependent carbamoyl phosphate synthetase (CPSase). CPSase catalyzes the formation of carbamoyl phosphate from the ammonia moiety of glutamine, carbonate, and phosphate donated by ATP, constituting the first step of 2 biosynthetic pathways, one leading to arginine and/or urea and the other to pyrimidine nucleotides. The small subunit (glutamine amidotransferase) binds and cleaves glutamine to supply the large subunit with the substrate ammonia. In Brucella canis (strain ATCC 23365 / NCTC 10854 / RM-666), this protein is Carbamoyl phosphate synthase small chain.